Consider the following 495-residue polypeptide: Lysine--tRNA ligase (495 aa).

Glu-406 and Glu-413 together coordinate Mg(2+).

This sequence belongs to the class-II aminoacyl-tRNA synthetase family. As to quaternary structure, homodimer. It depends on Mg(2+) as a cofactor.

The protein resides in the cytoplasm. The enzyme catalyses tRNA(Lys) + L-lysine + ATP = L-lysyl-tRNA(Lys) + AMP + diphosphate. The polypeptide is Lysine--tRNA ligase (Leptospira borgpetersenii serovar Hardjo-bovis (strain JB197)).